The primary structure comprises 543 residues: Sensor histidine kinase DcuS (543 aa).

The Cytoplasmic portion of the chain corresponds to 1–20 (MRHSLPYRMLRKRPMKLSTT). A helical membrane pass occupies residues 21-41 (VILMVSAVLFSVLLVVHLIYF). Topologically, residues 42–181 (SQISDMTRDG…VTQQINDSRW (140 aa)) are periplasmic. Residues 107–110 (RYSH), K121, 140–142 (GFL), and R147 each bind (R)-malate. The helical transmembrane segment at 182-202 (SIIWSVLFGMLVGLIGTCILV) threads the bilayer. Residues 203 to 543 (KVLKKILFGL…IPWDGERSNR (341 aa)) lie on the Cytoplasmic side of the membrane. The PAS domain occupies 212 to 323 (LEPYEISTLF…IIGAISTFRD (112 aa)). In terms of domain architecture, Histidine kinase spans 346–538 (ERSHEFMNKL…QFFVQIPWDG (193 aa)). H349 carries the post-translational modification Phosphohistidine; by autocatalysis.

As to quaternary structure, homodimer. Autophosphorylated. The phosphoryl group is rapidly transferred to DcuR.

It localises to the cell inner membrane. It catalyses the reaction ATP + protein L-histidine = ADP + protein N-phospho-L-histidine.. Its function is as follows. Member of the two-component regulatory system DcuR/DcuS. Involved in the C4-dicarboxylate-stimulated regulation of the genes encoding the anaerobic fumarate respiratory system (frdABCD; nuoAN; dcuB; sdhCDAB; etc.). Weakly regulates the aerobic C4-dicarboxylate transporter dctA. Activates DcuR by phosphorylation. The sequence is that of Sensor histidine kinase DcuS (dcuS) from Escherichia coli O157:H7.